The chain runs to 261 residues: Cytochrome c oxidase subunit 3 (261 aa).

Residues 1–15 (MAHQAHAYHMVDPSP) are Mitochondrial matrix-facing. A helical membrane pass occupies residues 16-34 (WPLTGAIAALLLTSGTAVW). Over 35-40 (FHFHSL) the chain is Mitochondrial intermembrane. The chain crosses the membrane as a helical span at residues 41-66 (TLLTLGNILLLLTMYQWWRDIIREGT). Topologically, residues 67–72 (FQGHHT) are mitochondrial matrix. The helical transmembrane segment at 73 to 105 (PPVQKGLRYGMILFITSEVFFFLGFFWAFYHAS) threads the bilayer. Residues 106 to 128 (LAPTPELGGCWPPAGITTLDPFE) lie on the Mitochondrial intermembrane side of the membrane. A helical transmembrane segment spans residues 129–152 (VPLLNTAVLLASGVTVTWAHHSIM). Residues 153-155 (EGE) lie on the Mitochondrial matrix side of the membrane. Residues 156–183 (RKQTIQALTLTILLGFYFTFLQGMEYYE) form a helical membrane-spanning segment. The Mitochondrial intermembrane segment spans residues 184–190 (APFTIAD). A helical transmembrane segment spans residues 191 to 223 (GVYGSTFFVATGFHGLHVIIGSTFLAVCLLRQV). Over 224 to 232 (QYHFTSEHH) the chain is Mitochondrial matrix. A helical membrane pass occupies residues 233 to 256 (FGFEAAAWYWHFVDVVWLFLYVSI). Over 257 to 261 (YWWGS) the chain is Mitochondrial intermembrane.

Belongs to the cytochrome c oxidase subunit 3 family. As to quaternary structure, component of the cytochrome c oxidase (complex IV, CIV), a multisubunit enzyme composed of 14 subunits. The complex is composed of a catalytic core of 3 subunits MT-CO1, MT-CO2 and MT-CO3, encoded in the mitochondrial DNA, and 11 supernumerary subunits COX4I, COX5A, COX5B, COX6A, COX6B, COX6C, COX7A, COX7B, COX7C, COX8 and NDUFA4, which are encoded in the nuclear genome. The complex exists as a monomer or a dimer and forms supercomplexes (SCs) in the inner mitochondrial membrane with NADH-ubiquinone oxidoreductase (complex I, CI) and ubiquinol-cytochrome c oxidoreductase (cytochrome b-c1 complex, complex III, CIII), resulting in different assemblies (supercomplex SCI(1)III(2)IV(1) and megacomplex MCI(2)III(2)IV(2)).

It is found in the mitochondrion inner membrane. The enzyme catalyses 4 Fe(II)-[cytochrome c] + O2 + 8 H(+)(in) = 4 Fe(III)-[cytochrome c] + 2 H2O + 4 H(+)(out). Component of the cytochrome c oxidase, the last enzyme in the mitochondrial electron transport chain which drives oxidative phosphorylation. The respiratory chain contains 3 multisubunit complexes succinate dehydrogenase (complex II, CII), ubiquinol-cytochrome c oxidoreductase (cytochrome b-c1 complex, complex III, CIII) and cytochrome c oxidase (complex IV, CIV), that cooperate to transfer electrons derived from NADH and succinate to molecular oxygen, creating an electrochemical gradient over the inner membrane that drives transmembrane transport and the ATP synthase. Cytochrome c oxidase is the component of the respiratory chain that catalyzes the reduction of oxygen to water. Electrons originating from reduced cytochrome c in the intermembrane space (IMS) are transferred via the dinuclear copper A center (CU(A)) of subunit 2 and heme A of subunit 1 to the active site in subunit 1, a binuclear center (BNC) formed by heme A3 and copper B (CU(B)). The BNC reduces molecular oxygen to 2 water molecules using 4 electrons from cytochrome c in the IMS and 4 protons from the mitochondrial matrix. This Oncorhynchus mykiss (Rainbow trout) protein is Cytochrome c oxidase subunit 3 (mt-co3).